We begin with the raw amino-acid sequence, 310 residues long: N-acetyl-gamma-glutamyl-phosphate reductase (310 aa).

C117 is an active-site residue.

Belongs to the NAGSA dehydrogenase family. Type 2 subfamily.

It is found in the cytoplasm. It carries out the reaction N-acetyl-L-glutamate 5-semialdehyde + phosphate + NADP(+) = N-acetyl-L-glutamyl 5-phosphate + NADPH + H(+). Its pathway is amino-acid biosynthesis; L-arginine biosynthesis; N(2)-acetyl-L-ornithine from L-glutamate: step 3/4. Its function is as follows. Catalyzes the NADPH-dependent reduction of N-acetyl-5-glutamyl phosphate to yield N-acetyl-L-glutamate 5-semialdehyde. In Brucella abortus (strain S19), this protein is N-acetyl-gamma-glutamyl-phosphate reductase.